The primary structure comprises 415 residues: Mitochondrial tRNA-specific 2-thiouridylase 1 (415 aa).

Residues 37–44 (AMSGGVDS) and Met63 each bind ATP. An interaction with target base in tRNA region spans residues 124–126 (NPD). Cys129 acts as the Nucleophile in catalysis. A disulfide bond links Cys129 and Cys234. Gly159 lines the ATP pocket. Residues 183–185 (KDQ) are interaction with tRNA. The active-site Cysteine persulfide intermediate is the Cys234. The tract at residues 356–357 (RH) is interaction with tRNA.

This sequence belongs to the MnmA/TRMU family.

Its subcellular location is the mitochondrion. The enzyme catalyses 5-taurinomethyluridine(34) in tRNA + S-sulfanyl-L-cysteinyl-[protein] + AH2 + ATP = 5-taurinomethyl-2-thiouridine(34) in tRNA + L-cysteinyl-[protein] + A + AMP + diphosphate + H(+). In terms of biological role, catalyzes the 2-thiolation of uridine at the wobble position (U34) of mitochondrial tRNA(Lys), tRNA(Glu) and tRNA(Gln). Required for the formation of 5-taurinomethyl-2-thiouridine (tm5s2U) of mitochondrial tRNA(Lys), tRNA(Glu), and tRNA(Gln) at the wobble position. ATP is required to activate the C2 atom of the wobble base. The protein is Mitochondrial tRNA-specific 2-thiouridylase 1 of Schizosaccharomyces pombe (strain 972 / ATCC 24843) (Fission yeast).